Consider the following 59-residue polypeptide: UPF0434 protein HEAR2489 (59 aa).

The protein belongs to the UPF0434 family.

In Herminiimonas arsenicoxydans, this protein is UPF0434 protein HEAR2489.